The chain runs to 819 residues: MDIQLDPARDDLPLMANTSHILVKHYVLDLDVDFESQVIEGTIVLFLEDGNRFKKQNSSIEEACQSESNKACKFGMPEPCHIPVTNARTFSSEMEYNDFAICSKGEKDTSDKDGNHDNQEHASGISSSKYCCDTGNHGSEDFLLVLDCCDLSVLKVEEVDVAAVPGLEKFTRSPELTVVSEEFRNQIVRELVTLPANRWREQLDYYARCSQAPGCGELLFDTDTWSLQIRKTGAQTATDFPHAIRIWYKTKPEGRSVTWTSDQSGRPCVYTVGSPINNRALFPCQEPPVAMSTWQATVRAAASFVVLMSGENSAKPTQLWEECSSWYYYVTMPMPASTFTIAVGCWTEMKMETWSSNDLATERPFSPSEANFRHVGVCSHMEYPCRFQNASATTQEIIPHRVFAPVCLTGACQETLLRLIPPCLSAAHSVLGAHPFSRLDVLIVPANFPSLGMASPHIMFLSQSILTGGNHLCGTRLCHEIAHAWFGLAIGARDWTEEWLSEGFATHLEDVFWATAQQLAPYEAREQQELRACLRWRRLQDEMQCSPEEMQVLRPSKDKTGHTSDSGASVIKHGLNPEKIFMQVHYLKGYFLLRFLAKRLGDETYFSFLRKFVHTFHGQLILSQDFLQMLLENIPEEKRLELSVENIYQDWLESSGIPKPLQRERRAGAECGLARQVRAEVTKWIGVNRRPRKRKRREKEEVFEKLLPDQLVLLLEHLLEQKTLSPRTLQSLQRTYHLQDQDAEVRHRWCELIVKHKFTKAYKSVERFLQEDQAMGVYLYGELMVSEDARQQQLARRCFERTKEQMDRSSAQVVAEMLF.

His479 provides a ligand contact to Zn(2+). Glu480 acts as the Proton acceptor in catalysis. Zn(2+) contacts are provided by His483 and Glu502. The Nucleolar localization signal signature appears at 689–699 (RRPRKRKRREK).

This sequence belongs to the peptidase M1 family. Zn(2+) serves as cofactor.

It is found in the nucleus. The protein resides in the nucleolus. Its subcellular location is the cytoplasm. Its function is as follows. Aminopeptidase which catalyzes the hydrolysis of amino acid residues from the N-terminus of peptide or protein substrates. In Homo sapiens (Human), this protein is Aminopeptidase O.